We begin with the raw amino-acid sequence, 122 residues long: Holo-[acyl-carrier-protein] synthase (122 aa).

Aspartate 8 and glutamate 56 together coordinate Mg(2+).

Belongs to the P-Pant transferase superfamily. AcpS family. The cofactor is Mg(2+).

It localises to the cytoplasm. It catalyses the reaction apo-[ACP] + CoA = holo-[ACP] + adenosine 3',5'-bisphosphate + H(+). Functionally, transfers the 4'-phosphopantetheine moiety from coenzyme A to a Ser of acyl-carrier-protein. This chain is Holo-[acyl-carrier-protein] synthase, found in Salinispora arenicola (strain CNS-205).